The primary structure comprises 510 residues: Glutamyl-tRNA(Gln) amidotransferase subunit A (510 aa).

Residues Lys-82 and Ser-157 each act as charge relay system in the active site. Catalysis depends on Ser-181, which acts as the Acyl-ester intermediate.

This sequence belongs to the amidase family. GatA subfamily. Heterotrimer of A, B and C subunits.

The enzyme catalyses L-glutamyl-tRNA(Gln) + L-glutamine + ATP + H2O = L-glutaminyl-tRNA(Gln) + L-glutamate + ADP + phosphate + H(+). Its function is as follows. Allows the formation of correctly charged Gln-tRNA(Gln) through the transamidation of misacylated Glu-tRNA(Gln) in organisms which lack glutaminyl-tRNA synthetase. The reaction takes place in the presence of glutamine and ATP through an activated gamma-phospho-Glu-tRNA(Gln). In Bordetella avium (strain 197N), this protein is Glutamyl-tRNA(Gln) amidotransferase subunit A.